A 257-amino-acid polypeptide reads, in one-letter code: MAPAMESPTLLCVALLFFAPDGVLAVPQKPKVSLNPPWNRIFKGENVTLTCNGNNFFEVSSTKWFHNGSLSEETNSSLNIVNAKFEDSGEYKCQHQQVNESEPVYLEVFSDWLLLQASAEVVMEGQPLFLRCHGWRNWDVYKVIYYKDGEALKYWYENHNISITNATVEDSGTYYCTGKVWQLDYESEPLNITVIKAPREKYWLQFFIPLLVVILFAVDTGLFISTQQQVTFLLKIKRTRKGFRLLNPHPKPNPKNN.

The N-terminal stretch at methionine 1–alanine 25 is a signal peptide. At valine 26–glutamine 205 the chain is on the extracellular side. 2 consecutive Ig-like domains span residues proline 30–serine 110 and aspartate 111–threonine 193. N-linked (GlcNAc...) asparagine glycosylation is found at asparagine 46, asparagine 67, asparagine 75, asparagine 99, asparagine 160, asparagine 165, and asparagine 191. The cysteines at positions 51 and 93 are disulfide-linked. Cysteine 132 and cysteine 176 are joined by a disulfide. A helical membrane pass occupies residues phenylalanine 206–isoleucine 224. Topologically, residues serine 225–asparagine 257 are cytoplasmic.

As to quaternary structure, tetramer of an alpha chain, a beta chain, and two disulfide linked gamma chains. Interacts with IGHE (via CH3 region). As to expression, expressed in eosinophils.

It is found in the cell membrane. Its function is as follows. High-affinity receptor for immunoglobulin epsilon/IgE. Mediates IgE effector functions in myeloid cells. Upon IgE binding and antigen/allergen cross-linking initiates signaling pathways that lead to myeloid cell activation and differentiation. On mast cells, basophils and eosinophils stimulates the secretion of vasoactive amines, lipid mediators and cytokines that contribute to inflammatory response, tissue remodeling and cytotoxicity against microbes. Triggers the immediate hypersensitivity response to allergens as a host defense mechanism against helminth parasites, pathogenic bacteria and venom toxicity. When dysregulated, it can elicit harmful life-threatening allergic and anaphylactic reactions. This Homo sapiens (Human) protein is High affinity immunoglobulin epsilon receptor subunit alpha (FCER1A).